The sequence spans 280 residues: Keratin, type I cytoskeletal 47 kDa (280 aa).

The head stretch occupies residues 1 to 81 (MSFRSSSSYS…SSSFSSFGGN (81 aa)). The segment at 82–117 (DKQTMQNLNDRLASYLEKVRALEAANADLELKIREW) is coil 1A. The IF rod domain maps to 82 to 280 (DKQTMQNLND…RDAELWFNQK (199 aa)). A linker 1 region spans residues 118–139 (YEKQKGSGIGAASKDFSKYFEI). Residues 140-231 (ISDLRNKILF…KNHEEEMSIA (92 aa)) form a coil 1B region. Residues 232–254 (KGSAAGQVTVEMDAAPGVDLNKI) are linker 12. The tract at residues 255 to 280 (LSDMRADYETLAEKNRRDAELWFNQK) is coil 2.

The protein belongs to the intermediate filament family. Heterotetramer of two type I and two type II keratins.

The protein is Keratin, type I cytoskeletal 47 kDa (xk81b1) of Xenopus laevis (African clawed frog).